A 924-amino-acid polypeptide reads, in one-letter code: Lipoxygenase 7, chloroplastic (924 aa).

The N-terminal 61 residues, 1 to 61, are a transit peptide targeting the chloroplast; that stretch reads MLRPQLNPSS…GQGSSRVVVV (61 aa). The 131-residue stretch at 88 to 218 folds into the PLAT domain; the sequence is AVATIKVTVG…VGDEGTPSKR (131 aa). Residues 225-924 form the Lipoxygenase domain; it reads TYLPGQTPAG…GMGIPNSTSI (700 aa). Positions 231–315 are disordered; that stretch reads TPAGLRSYRK…PKSETRKGNV (85 aa). 2 stretches are compositionally biased toward basic and acidic residues: residues 239 to 262 and 302 to 315; these read RKNDLQQKRGDGTGEREADDRVYD and SKKDPKSETRKGNV. Fe cation-binding residues include histidine 581, histidine 586, histidine 773, asparagine 777, and isoleucine 924.

This sequence belongs to the lipoxygenase family. Requires Fe cation as cofactor.

It localises to the plastid. The protein resides in the chloroplast. The enzyme catalyses (9Z,12Z)-octadecadienoate + O2 = (13S)-hydroperoxy-(9Z,11E)-octadecadienoate. It carries out the reaction (9Z,12Z,15Z)-octadecatrienoate + O2 = (13S)-hydroperoxy-(9Z,11E,15Z)-octadecatrienoate. It participates in lipid metabolism; oxylipin biosynthesis. In terms of biological role, plant lipoxygenase may be involved in a number of diverse aspects of plant physiology including growth and development, pest resistance, and senescence or responses to wounding. This lipoxygenase introduces molecular oxygen exclusively into the C-13 position of linoleic and linolenic acids. This is Lipoxygenase 7, chloroplastic (CM-LOX1) from Oryza sativa subsp. japonica (Rice).